A 349-amino-acid polypeptide reads, in one-letter code: Anthranilate phosphoribosyltransferase (349 aa).

5-phospho-alpha-D-ribose 1-diphosphate-binding positions include Gly82, 85 to 86 (GD), 92 to 95 (NVST), 110 to 118 (KHGNRAVSG), and Ser122. Position 82 (Gly82) interacts with anthranilate. Residue Ser94 participates in Mg(2+) binding. Asn113 serves as a coordination point for anthranilate. Anthranilate is bound at residue Arg168. Residues Asp227 and Glu228 each coordinate Mg(2+).

The protein belongs to the anthranilate phosphoribosyltransferase family. As to quaternary structure, homodimer. It depends on Mg(2+) as a cofactor.

It catalyses the reaction N-(5-phospho-beta-D-ribosyl)anthranilate + diphosphate = 5-phospho-alpha-D-ribose 1-diphosphate + anthranilate. It functions in the pathway amino-acid biosynthesis; L-tryptophan biosynthesis; L-tryptophan from chorismate: step 2/5. Catalyzes the transfer of the phosphoribosyl group of 5-phosphorylribose-1-pyrophosphate (PRPP) to anthranilate to yield N-(5'-phosphoribosyl)-anthranilate (PRA). The sequence is that of Anthranilate phosphoribosyltransferase from Pseudomonas syringae pv. tomato (strain ATCC BAA-871 / DC3000).